The chain runs to 474 residues: tRNA-2-methylthio-N(6)-dimethylallyladenosine synthase (474 aa).

An MTTase N-terminal domain is found at lysine 3–serine 120. [4Fe-4S] cluster is bound by residues cysteine 12, cysteine 49, cysteine 83, cysteine 157, cysteine 161, and cysteine 164. One can recognise a Radical SAM core domain in the interval arginine 143–arginine 375. The TRAM domain maps to arginine 378–arginine 441.

The protein belongs to the methylthiotransferase family. MiaB subfamily. As to quaternary structure, monomer. Requires [4Fe-4S] cluster as cofactor.

Its subcellular location is the cytoplasm. The enzyme catalyses N(6)-dimethylallyladenosine(37) in tRNA + (sulfur carrier)-SH + AH2 + 2 S-adenosyl-L-methionine = 2-methylsulfanyl-N(6)-dimethylallyladenosine(37) in tRNA + (sulfur carrier)-H + 5'-deoxyadenosine + L-methionine + A + S-adenosyl-L-homocysteine + 2 H(+). Catalyzes the methylthiolation of N6-(dimethylallyl)adenosine (i(6)A), leading to the formation of 2-methylthio-N6-(dimethylallyl)adenosine (ms(2)i(6)A) at position 37 in tRNAs that read codons beginning with uridine. This chain is tRNA-2-methylthio-N(6)-dimethylallyladenosine synthase, found in Vibrio vulnificus (strain YJ016).